A 262-amino-acid polypeptide reads, in one-letter code: Ribosome-recycling factor, mitochondrial (262 aa).

A mitochondrion-targeting transit peptide spans Met-1–Phe-55.

This sequence belongs to the RRF family.

The protein localises to the mitochondrion. Functionally, responsible for the disassembly of ribosomes from messenger RNA at the termination of mitochondrial protein biosynthesis. Acts in collaboration with GFM2. Promotes mitochondrial ribosome recycling by dissolution of intersubunit contacts. In Rattus norvegicus (Rat), this protein is Ribosome-recycling factor, mitochondrial (Mrrf).